The sequence spans 318 residues: Melanoma-associated antigen 8 (318 aa).

Residues 1 to 103 (MLLGQKSQRY…GPSTSPDPAH (103 aa)) are disordered. The 200-residue stretch at 112–311 (LDEKVAELVR…ISYPSLHEEA (200 aa)) folds into the MAGE domain.

As to expression, expressed in many tumors of several types, such as melanoma, head and neck squamous cell carcinoma, lung carcinoma and breast carcinoma, but not in normal tissues except for testis and placenta.

In terms of biological role, not known, though may play a role in embryonal development and tumor transformation or aspects of tumor progression. The sequence is that of Melanoma-associated antigen 8 (MAGEA8) from Homo sapiens (Human).